The following is a 313-amino-acid chain: Porphobilinogen deaminase (313 aa).

Cys242 bears the S-(dipyrrolylmethanemethyl)cysteine mark.

It belongs to the HMBS family. Monomer. Requires dipyrromethane as cofactor.

It carries out the reaction 4 porphobilinogen + H2O = hydroxymethylbilane + 4 NH4(+). The protein operates within porphyrin-containing compound metabolism; protoporphyrin-IX biosynthesis; coproporphyrinogen-III from 5-aminolevulinate: step 2/4. Tetrapolymerization of the monopyrrole PBG into the hydroxymethylbilane pre-uroporphyrinogen in several discrete steps. This Pseudomonas putida (strain W619) protein is Porphobilinogen deaminase.